Reading from the N-terminus, the 258-residue chain is UPF0246 protein CGSHiEE_07045 (258 aa).

The protein belongs to the UPF0246 family.

This Haemophilus influenzae (strain PittEE) protein is UPF0246 protein CGSHiEE_07045.